Reading from the N-terminus, the 795-residue chain is Lon protease (795 aa).

In terms of domain architecture, Lon N-terminal spans 17-214; sequence YPLMPLRDIV…KVYKFLQDEI (198 aa). ATP is bound at residue 370 to 377; the sequence is GPPGVGKT. The 183-residue stretch at 605–787 folds into the Lon proteolytic domain; sequence KPLVGVATGL…EEVFKIALVR (183 aa). Catalysis depends on residues Ser692 and Lys735.

The protein belongs to the peptidase S16 family. As to quaternary structure, homohexamer. Organized in a ring with a central cavity.

The protein resides in the cytoplasm. It carries out the reaction Hydrolysis of proteins in presence of ATP.. ATP-dependent serine protease that mediates the selective degradation of mutant and abnormal proteins as well as certain short-lived regulatory proteins. Required for cellular homeostasis and for survival from DNA damage and developmental changes induced by stress. Degrades polypeptides processively to yield small peptide fragments that are 5 to 10 amino acids long. Binds to DNA in a double-stranded, site-specific manner. The polypeptide is Lon protease (Aquifex aeolicus (strain VF5)).